Consider the following 97-residue polypeptide: Mitochondrial import inner membrane translocase subunit Tim8 A (97 aa).

The Twin CX3C motif motif lies at 43 to 66 (CWEKCMDKPGPKLDSRAEACFVNC). 2 cysteine pairs are disulfide-bonded: Cys43–Cys66 and Cys47–Cys62. Residues Ser57, Ser87, Ser94, and Ser96 each carry the phosphoserine modification.

It belongs to the small Tim family. As to quaternary structure, heterohexamer; composed of 3 copies of TIMM8A and 3 copies of TIMM13, named soluble 70 kDa complex. Associates with the TIM22 complex, whose core is composed of TIMM22. As to expression, highly expressed in fetal and adult brain, followed by fetal lung, liver and kidney. Also expressed in heart, placenta, lung, liver, kidney, pancreas, skeletal muscle and heart.

It localises to the mitochondrion inner membrane. Mitochondrial intermembrane chaperone that participates in the import and insertion of some multi-pass transmembrane proteins into the mitochondrial inner membrane. Also required for the transfer of beta-barrel precursors from the TOM complex to the sorting and assembly machinery (SAM complex) of the outer membrane. Acts as a chaperone-like protein that protects the hydrophobic precursors from aggregation and guide them through the mitochondrial intermembrane space. The TIMM8-TIMM13 complex mediates the import of proteins such as TIMM23, SLC25A12/ARALAR1 and SLC25A13/ARALAR2, while the predominant TIMM9-TIMM10 70 kDa complex mediates the import of much more proteins. Probably necessary for normal neurologic development. This Homo sapiens (Human) protein is Mitochondrial import inner membrane translocase subunit Tim8 A (TIMM8A).